The chain runs to 510 residues: ATP synthase subunit alpha (510 aa).

169–176 is a binding site for ATP; that stretch reads GDRQTGKT.

It belongs to the ATPase alpha/beta chains family. In terms of assembly, F-type ATPases have 2 components, CF(1) - the catalytic core - and CF(0) - the membrane proton channel. CF(1) has five subunits: alpha(3), beta(3), gamma(1), delta(1), epsilon(1). CF(0) has three main subunits: a(1), b(2) and c(9-12). The alpha and beta chains form an alternating ring which encloses part of the gamma chain. CF(1) is attached to CF(0) by a central stalk formed by the gamma and epsilon chains, while a peripheral stalk is formed by the delta and b chains.

Its subcellular location is the cell inner membrane. It carries out the reaction ATP + H2O + 4 H(+)(in) = ADP + phosphate + 5 H(+)(out). Its function is as follows. Produces ATP from ADP in the presence of a proton gradient across the membrane. The alpha chain is a regulatory subunit. The sequence is that of ATP synthase subunit alpha from Rickettsia felis (strain ATCC VR-1525 / URRWXCal2) (Rickettsia azadi).